The following is a 411-amino-acid chain: Probable peptidoglycan glycosyltransferase FtsW (411 aa).

Over 1-40 (MLERMLPFLGRKRDKAAADLPVRVGHSAPRNSRMLEYDQN) the chain is Cytoplasmic. A helical membrane pass occupies residues 41-61 (LVWVTLLLLAYGLVMVYSATI). Residues 62 to 81 (SFHDSPRYAQWSPYHYFIRD) lie on the Periplasmic side of the membrane. Residues 82–102 (LFSIAAALLASWIVVQIPMAE) form a helical membrane-spanning segment. At 103-109 (LQKWSMR) the chain is on the cytoplasmic side. Residues 110-130 (FFFLSLIGLVLVLLPHIGKDV) form a helical membrane-spanning segment. At 131-136 (NGSKRW) the chain is on the periplasmic side. Residues 137 to 157 (VVFPGGLNFQPSELVKLTALI) form a helical membrane-spanning segment. Residues 158-172 (YAADFMVRKQEVKQS) are Cytoplasmic-facing. Residues 173 to 193 (LLKTFLPMMAVMMIVGVLLLA) form a helical membrane-spanning segment. Residues 194 to 196 (EPD) are Periplasmic-facing. A helical membrane pass occupies residues 197–217 (MGAFLVIASITLAILFLGGAN). The Cytoplasmic segment spans residues 218–219 (GK). Residues 220-240 (LFSVFSVAVIGAFVLMIVLSP) traverse the membrane as a helical segment. Over 241–298 (WRRDRIFAYLNPWSESNALGSAYQLSHALIAMGRGEWFGVGLGGSIEKLHYLPEAHTD) the chain is Periplasmic. A helical membrane pass occupies residues 299–319 (FLLAIIGEELGLVGVGVVIFA). The Cytoplasmic portion of the chain corresponds to 320–347 (FYWIVRRAFDIGRQALVLDRMYSALVAQ). A helical transmembrane segment spans residues 348 to 368 (GIGVWIGGQAFINIGVNLGLL). Topologically, residues 369–374 (PTKGLT) are periplasmic. A helical membrane pass occupies residues 375 to 395 (LPLMSYGGSALLLNCMAIAVL). The Cytoplasmic portion of the chain corresponds to 396–411 (LRVDFENRILMRGGHV).

The protein belongs to the SEDS family. FtsW subfamily.

It is found in the cell inner membrane. The enzyme catalyses [GlcNAc-(1-&gt;4)-Mur2Ac(oyl-L-Ala-gamma-D-Glu-L-Lys-D-Ala-D-Ala)](n)-di-trans,octa-cis-undecaprenyl diphosphate + beta-D-GlcNAc-(1-&gt;4)-Mur2Ac(oyl-L-Ala-gamma-D-Glu-L-Lys-D-Ala-D-Ala)-di-trans,octa-cis-undecaprenyl diphosphate = [GlcNAc-(1-&gt;4)-Mur2Ac(oyl-L-Ala-gamma-D-Glu-L-Lys-D-Ala-D-Ala)](n+1)-di-trans,octa-cis-undecaprenyl diphosphate + di-trans,octa-cis-undecaprenyl diphosphate + H(+). It participates in cell wall biogenesis; peptidoglycan biosynthesis. Its function is as follows. Peptidoglycan polymerase that is essential for cell division. In Thiomonas intermedia (strain K12) (Thiobacillus intermedius), this protein is Probable peptidoglycan glycosyltransferase FtsW.